A 444-amino-acid chain; its full sequence is Tol-Pal system protein TolB (444 aa).

A signal peptide spans 1–19 (MRNIIYFILLLLFSFKGYA).

This sequence belongs to the TolB family. The Tol-Pal system is composed of five core proteins: the inner membrane proteins TolA, TolQ and TolR, the periplasmic protein TolB and the outer membrane protein Pal. They form a network linking the inner and outer membranes and the peptidoglycan layer.

The protein resides in the periplasm. Its function is as follows. Part of the Tol-Pal system, which plays a role in outer membrane invagination during cell division and is important for maintaining outer membrane integrity. This is Tol-Pal system protein TolB from Rickettsia akari (strain Hartford).